The sequence spans 251 residues: GTP cyclohydrolase 1 type 2 homolog (251 aa).

H64, H65, D102, H219, and E223 together coordinate a divalent metal cation.

It belongs to the GTP cyclohydrolase I type 2/NIF3 family. In terms of assembly, homohexamer.

The protein is GTP cyclohydrolase 1 type 2 homolog of Chlamydia pneumoniae (Chlamydophila pneumoniae).